The following is a 605-amino-acid chain: Aspartate--tRNA(Asp/Asn) ligase (605 aa).

An L-aspartate-binding site is contributed by glutamate 172. The interval 196–199 (QLFK) is aspartate. Arginine 218 contacts L-aspartate. ATP contacts are provided by residues 218-220 (RDE) and glutamine 227. Histidine 455 lines the L-aspartate pocket. Glutamate 489 is a binding site for ATP. Arginine 496 is a binding site for L-aspartate. Position 541-544 (541-544 (GLDR)) interacts with ATP.

It belongs to the class-II aminoacyl-tRNA synthetase family. Type 1 subfamily. Homodimer.

It is found in the cytoplasm. It carries out the reaction tRNA(Asx) + L-aspartate + ATP = L-aspartyl-tRNA(Asx) + AMP + diphosphate. Its function is as follows. Aspartyl-tRNA synthetase with relaxed tRNA specificity since it is able to aspartylate not only its cognate tRNA(Asp) but also tRNA(Asn). Reaction proceeds in two steps: L-aspartate is first activated by ATP to form Asp-AMP and then transferred to the acceptor end of tRNA(Asp/Asn). The chain is Aspartate--tRNA(Asp/Asn) ligase from Ralstonia nicotianae (strain ATCC BAA-1114 / GMI1000) (Ralstonia solanacearum).